Here is a 455-residue protein sequence, read N- to C-terminus: Bifunctional protein GlmU (455 aa).

The interval 1-229 (MYNCAILLAA…FEETMGVNSR (229 aa)) is pyrophosphorylase. UDP-N-acetyl-alpha-D-glucosamine-binding positions include 8–11 (LAAG), K22, Q73, and 78–79 (GT). D103 is a Mg(2+) binding site. Residues G140, E155, N170, and N227 each contribute to the UDP-N-acetyl-alpha-D-glucosamine site. N227 provides a ligand contact to Mg(2+). Positions 230–250 (LQLAEVEAIMRKRINAMHLEN) are linker. The interval 251–455 (GVTIIDPNNT…EDWVKKKDEK (205 aa)) is N-acetyltransferase. Positions 332 and 350 each coordinate UDP-N-acetyl-alpha-D-glucosamine. H362 (proton acceptor) is an active-site residue. UDP-N-acetyl-alpha-D-glucosamine-binding residues include Y365 and N376. Acetyl-CoA-binding positions include 385–386 (NY), A422, and R439.

This sequence in the N-terminal section; belongs to the N-acetylglucosamine-1-phosphate uridyltransferase family. The protein in the C-terminal section; belongs to the transferase hexapeptide repeat family. In terms of assembly, homotrimer. Mg(2+) is required as a cofactor.

It is found in the cytoplasm. The enzyme catalyses alpha-D-glucosamine 1-phosphate + acetyl-CoA = N-acetyl-alpha-D-glucosamine 1-phosphate + CoA + H(+). The catalysed reaction is N-acetyl-alpha-D-glucosamine 1-phosphate + UTP + H(+) = UDP-N-acetyl-alpha-D-glucosamine + diphosphate. Its pathway is nucleotide-sugar biosynthesis; UDP-N-acetyl-alpha-D-glucosamine biosynthesis; N-acetyl-alpha-D-glucosamine 1-phosphate from alpha-D-glucosamine 6-phosphate (route II): step 2/2. It functions in the pathway nucleotide-sugar biosynthesis; UDP-N-acetyl-alpha-D-glucosamine biosynthesis; UDP-N-acetyl-alpha-D-glucosamine from N-acetyl-alpha-D-glucosamine 1-phosphate: step 1/1. The protein operates within bacterial outer membrane biogenesis; LPS lipid A biosynthesis. Its function is as follows. Catalyzes the last two sequential reactions in the de novo biosynthetic pathway for UDP-N-acetylglucosamine (UDP-GlcNAc). The C-terminal domain catalyzes the transfer of acetyl group from acetyl coenzyme A to glucosamine-1-phosphate (GlcN-1-P) to produce N-acetylglucosamine-1-phosphate (GlcNAc-1-P), which is converted into UDP-GlcNAc by the transfer of uridine 5-monophosphate (from uridine 5-triphosphate), a reaction catalyzed by the N-terminal domain. The sequence is that of Bifunctional protein GlmU from Clostridium tetani (strain Massachusetts / E88).